Here is a 252-residue protein sequence, read N- to C-terminus: Hydroxyacylglutathione hydrolase (252 aa).

Zn(2+)-binding residues include His52, His54, Asp56, His57, His107, Asp128, and His166.

Belongs to the metallo-beta-lactamase superfamily. Glyoxalase II family. In terms of assembly, monomer. Zn(2+) is required as a cofactor.

The catalysed reaction is an S-(2-hydroxyacyl)glutathione + H2O = a 2-hydroxy carboxylate + glutathione + H(+). It functions in the pathway secondary metabolite metabolism; methylglyoxal degradation; (R)-lactate from methylglyoxal: step 2/2. In terms of biological role, thiolesterase that catalyzes the hydrolysis of S-D-lactoyl-glutathione to form glutathione and D-lactic acid. The protein is Hydroxyacylglutathione hydrolase of Neisseria meningitidis serogroup C / serotype 2a (strain ATCC 700532 / DSM 15464 / FAM18).